The primary structure comprises 555 residues: Methyl-coenzyme M reductase subunit alpha (555 aa).

Gln152 contributes to the coenzyme F430 binding site. Coenzyme B is bound by residues Arg230, 261-262 (KH), and Arg275. Coenzyme M-binding residues include Tyr337 and Tyr448.

It belongs to the methyl-coenzyme M reductase alpha subunit family. As to quaternary structure, MCR is a hexamer of two alpha, two beta, and two gamma chains, forming a dimer of heterotrimers. The cofactor is coenzyme F430.

The protein resides in the cytoplasm. It carries out the reaction coenzyme B + methyl-coenzyme M = methane + coenzyme M-coenzyme B heterodisulfide. It participates in one-carbon metabolism; methyl-coenzyme M reduction; methane from methyl-coenzyme M: step 1/1. Component of the methyl-coenzyme M reductase (MCR) I that catalyzes the reductive cleavage of methyl-coenzyme M (CoM-S-CH3 or 2-(methylthio)ethanesulfonate) using coenzyme B (CoB or 7-mercaptoheptanoylthreonine phosphate) as reductant which results in the production of methane and the mixed heterodisulfide of CoB and CoM (CoM-S-S-CoB). This is the final step in methanogenesis. This is Methyl-coenzyme M reductase subunit alpha (mcrA) from Methanococcus voltae.